The chain runs to 74 residues: Veswaprin-a (74 aa).

An N-terminal signal peptide occupies residues 1–24 (MSSGGLLLLLGLLTLWAEVTPISG). Residues 27–71 (RPKKPGLCPPRPQKPCVKECKNDWSCPGQQKCCNYGCIDECRDPI) form the WAP domain. Intrachain disulfides connect C34–C59, C42–C63, C46–C58, and C52–C67.

The protein belongs to the venom waprin family. Expressed by the venom gland.

Its subcellular location is the secreted. Damages membranes of susceptible bacteria. Has no hemolytic activity. Not toxic to mice. Does not inhibit the proteinases elastase and cathepsin G. In Demansia vestigiata (Lesser black whip snake), this protein is Veswaprin-a.